Reading from the N-terminus, the 497-residue chain is Glycerol kinase (497 aa).

Thr12 contacts ADP. 3 residues coordinate ATP: Thr12, Thr13, and Ser14. A sn-glycerol 3-phosphate-binding site is contributed by Thr12. Arg16 is an ADP binding site. Residues Arg82, Glu83, Tyr134, and Asp243 each contribute to the sn-glycerol 3-phosphate site. Glycerol-binding residues include Arg82, Glu83, Tyr134, Asp243, and Gln244. Residues Thr265 and Gly308 each coordinate ADP. ATP is bound by residues Thr265, Gly308, Gln312, and Gly411. Position 411 (Gly411) interacts with ADP.

This sequence belongs to the FGGY kinase family.

It catalyses the reaction glycerol + ATP = sn-glycerol 3-phosphate + ADP + H(+). It functions in the pathway polyol metabolism; glycerol degradation via glycerol kinase pathway; sn-glycerol 3-phosphate from glycerol: step 1/1. With respect to regulation, inhibited by fructose 1,6-bisphosphate (FBP). In terms of biological role, key enzyme in the regulation of glycerol uptake and metabolism. Catalyzes the phosphorylation of glycerol to yield sn-glycerol 3-phosphate. The protein is Glycerol kinase of Allorhizobium ampelinum (strain ATCC BAA-846 / DSM 112012 / S4) (Agrobacterium vitis (strain S4)).